We begin with the raw amino-acid sequence, 311 residues long: Methionyl-tRNA formyltransferase (311 aa).

Ser110 to Pro113 contributes to the (6S)-5,6,7,8-tetrahydrofolate binding site.

Belongs to the Fmt family.

It catalyses the reaction L-methionyl-tRNA(fMet) + (6R)-10-formyltetrahydrofolate = N-formyl-L-methionyl-tRNA(fMet) + (6S)-5,6,7,8-tetrahydrofolate + H(+). Attaches a formyl group to the free amino group of methionyl-tRNA(fMet). The formyl group appears to play a dual role in the initiator identity of N-formylmethionyl-tRNA by promoting its recognition by IF2 and preventing the misappropriation of this tRNA by the elongation apparatus. This Streptococcus mutans serotype c (strain ATCC 700610 / UA159) protein is Methionyl-tRNA formyltransferase.